We begin with the raw amino-acid sequence, 443 residues long: Proline--tRNA ligase (443 aa).

This sequence belongs to the class-II aminoacyl-tRNA synthetase family. ProS type 2 subfamily. As to quaternary structure, homodimer.

The protein resides in the cytoplasm. It carries out the reaction tRNA(Pro) + L-proline + ATP = L-prolyl-tRNA(Pro) + AMP + diphosphate. Its function is as follows. Catalyzes the attachment of proline to tRNA(Pro) in a two-step reaction: proline is first activated by ATP to form Pro-AMP and then transferred to the acceptor end of tRNA(Pro). The chain is Proline--tRNA ligase from Caulobacter vibrioides (strain ATCC 19089 / CIP 103742 / CB 15) (Caulobacter crescentus).